The chain runs to 239 residues: Uridylate kinase (239 aa).

Position 13 to 16 (13 to 16 (KVSG)) interacts with ATP. G55 serves as a coordination point for UMP. Residues G56 and R60 each contribute to the ATP site. Residues D75 and 136-143 (TGNPFFTT) each bind UMP. T163, Q164, Y169, and D172 together coordinate ATP.

This sequence belongs to the UMP kinase family. Homohexamer.

Its subcellular location is the cytoplasm. It catalyses the reaction UMP + ATP = UDP + ADP. It functions in the pathway pyrimidine metabolism; CTP biosynthesis via de novo pathway; UDP from UMP (UMPK route): step 1/1. Its activity is regulated as follows. Inhibited by UTP. Catalyzes the reversible phosphorylation of UMP to UDP. This Bartonella quintana (strain Toulouse) (Rochalimaea quintana) protein is Uridylate kinase.